We begin with the raw amino-acid sequence, 265 residues long: Cytochrome c oxidase subunit 3 (265 aa).

The next 6 helical transmembrane spans lie at 16–36 (PWPI…VMYM), 41–61 (GGAT…FVWW), 84–104 (YGSI…FWAS), 162–182 (AVYA…FQGM), 200–220 (FLLA…FLIV), and 242–262 (AWYW…IYWW).

Belongs to the cytochrome c oxidase subunit 3 family. In terms of assembly, component of the cytochrome c oxidase (complex IV, CIV), a multisubunit enzyme composed of a catalytic core of 3 subunits and several supernumerary subunits. The complex exists as a monomer or a dimer and forms supercomplexes (SCs) in the inner mitochondrial membrane with ubiquinol-cytochrome c oxidoreductase (cytochrome b-c1 complex, complex III, CIII).

The protein resides in the mitochondrion inner membrane. It carries out the reaction 4 Fe(II)-[cytochrome c] + O2 + 8 H(+)(in) = 4 Fe(III)-[cytochrome c] + 2 H2O + 4 H(+)(out). In terms of biological role, component of the cytochrome c oxidase, the last enzyme in the mitochondrial electron transport chain which drives oxidative phosphorylation. The respiratory chain contains 3 multisubunit complexes succinate dehydrogenase (complex II, CII), ubiquinol-cytochrome c oxidoreductase (cytochrome b-c1 complex, complex III, CIII) and cytochrome c oxidase (complex IV, CIV), that cooperate to transfer electrons derived from NADH and succinate to molecular oxygen, creating an electrochemical gradient over the inner membrane that drives transmembrane transport and the ATP synthase. Cytochrome c oxidase is the component of the respiratory chain that catalyzes the reduction of oxygen to water. Electrons originating from reduced cytochrome c in the intermembrane space (IMS) are transferred via the dinuclear copper A center (CU(A)) of subunit 2 and heme A of subunit 1 to the active site in subunit 1, a binuclear center (BNC) formed by heme A3 and copper B (CU(B)). The BNC reduces molecular oxygen to 2 water molecules using 4 electrons from cytochrome c in the IMS and 4 protons from the mitochondrial matrix. The sequence is that of Cytochrome c oxidase subunit 3 (COX3) from Zea mays (Maize).